Consider the following 199-residue polypeptide: ParB-like protein Saci_1498 (199 aa).

This sequence belongs to the ParB family.

Probably part of a 4-gene DNA damage response locus in which the upstream ups system, in combination with this downstream locus, functions in homologous recombination to rescue Sulfolobales from DNA-damaging threats. This protein might function in the DNA transfer machinery. The protein is ParB-like protein Saci_1498 of Sulfolobus acidocaldarius (strain ATCC 33909 / DSM 639 / JCM 8929 / NBRC 15157 / NCIMB 11770).